The following is a 241-amino-acid chain: Large ribosomal subunit protein uL1 (241 aa).

It belongs to the universal ribosomal protein uL1 family. Part of the 50S ribosomal subunit.

Functionally, binds directly to 23S rRNA. The L1 stalk is quite mobile in the ribosome, and is involved in E site tRNA release. In terms of biological role, protein L1 is also a translational repressor protein, it controls the translation of the L11 operon by binding to its mRNA. This Thermomicrobium roseum (strain ATCC 27502 / DSM 5159 / P-2) protein is Large ribosomal subunit protein uL1.